A 500-amino-acid polypeptide reads, in one-letter code: Toluene-4-monooxygenase system, hydroxylase component subunit alpha (500 aa).

Fe cation is bound by residues glutamate 104, glutamate 134, histidine 137, glutamate 197, glutamate 231, and histidine 234.

This sequence belongs to the TmoA/XamoA family. As to quaternary structure, the alkene monooxygenase multicomponent enzyme system is composed of an electron transfer component and a monooxygenase component interacting with the effector protein TmoD. The electron transfer component is composed of a ferredoxin reductase (TmoF) and a ferredoxin (TmoC), and the monooxygenase component is formed by a heterohexamer (dimer of heterotrimers) of two alpha subunits (TmoA), two beta subunits (TmoE) and two gamma subunits (TmoB). Requires Fe(2+) as cofactor.

It catalyses the reaction toluene + NADH + O2 + H(+) = 4-methylphenol + NAD(+) + H2O. It participates in xenobiotic degradation; toluene degradation. Inhibited by Zn(2+) and Cu(2+). In terms of biological role, component of the toluene-4-monooxygenase multicomponent enzyme system which catalyzes the O2- and NADH-dependent hydroxylation of toluene to form p-cresol. Also able to convert benzene to phenol, catechol, and 1,2,3-trihydroxybenzene by successive hydroxylations. The polypeptide is Toluene-4-monooxygenase system, hydroxylase component subunit alpha (Ectopseudomonas mendocina (Pseudomonas mendocina)).